Consider the following 222-residue polypeptide: 2-C-methyl-D-erythritol 4-phosphate cytidylyltransferase (222 aa).

This sequence belongs to the IspD/TarI cytidylyltransferase family. IspD subfamily.

The catalysed reaction is 2-C-methyl-D-erythritol 4-phosphate + CTP + H(+) = 4-CDP-2-C-methyl-D-erythritol + diphosphate. It participates in isoprenoid biosynthesis; isopentenyl diphosphate biosynthesis via DXP pathway; isopentenyl diphosphate from 1-deoxy-D-xylulose 5-phosphate: step 2/6. Functionally, catalyzes the formation of 4-diphosphocytidyl-2-C-methyl-D-erythritol from CTP and 2-C-methyl-D-erythritol 4-phosphate (MEP). This chain is 2-C-methyl-D-erythritol 4-phosphate cytidylyltransferase, found in Thermotoga sp. (strain RQ2).